The following is a 274-amino-acid chain: MGTDSRAAGALLARASTLHLQTGNLLNWGRLRKKCPSTHSEELRDCIQKTLNEWSSQISPDLVREFPDVLECTMSHAVEKINPDEREEMKVSAKLFIVGSNSSSSTRNAVDMACSVLGVAQLDSVIMASPPIEDGVNLSLEHLQPYWEELENLVQSKKIVAIGTSDLDKTQLEQLYQWAQVKPNSNQVNLASCCVMPPDLTAFAKQFDIQLLTHNDPKELLSEASFQEALQESIPDIEAQEWVPLWLLRYSVIVKSRGIIKSKGYILQAKRKGS.

Serine 59 bears the Phosphoserine mark. Lysine 263 is modified (N6-acetyllysine).

This sequence belongs to the aldo/keto reductase family. Glutamate--cysteine ligase light chain subfamily. Heterodimer of a catalytic heavy chain and a regulatory light chain. Most abundant in kidney. Also found in liver and testis.

It participates in sulfur metabolism; glutathione biosynthesis; glutathione from L-cysteine and L-glutamate: step 1/2. This Rattus norvegicus (Rat) protein is Glutamate--cysteine ligase regulatory subunit (Gclm).